We begin with the raw amino-acid sequence, 483 residues long: FAD-linked oxidoreductase easE (483 aa).

In terms of domain architecture, FAD-binding PCMH-type spans 10-193 (QGRLPFYSAV…TEATVRVFSD (184 aa)).

This sequence belongs to the oxygen-dependent FAD-linked oxidoreductase family. FAD serves as cofactor.

It participates in alkaloid biosynthesis; ergot alkaloid biosynthesis. Its function is as follows. FAD-linked oxidoreductase; part of the gene cluster that mediates the biosynthesis of fungal ergot alkaloid. DmaW catalyzes the first step of ergot alkaloid biosynthesis by condensing dimethylallyl diphosphate (DMAP) and tryptophan to form 4-dimethylallyl-L-tryptophan. The second step is catalyzed by the methyltransferase easF that methylates 4-dimethylallyl-L-tryptophan in the presence of S-adenosyl-L-methionine, resulting in the formation of 4-dimethylallyl-L-abrine. The catalase easC and the FAD-dependent oxidoreductase easE then transform 4-dimethylallyl-L-abrine to chanoclavine-I which is further oxidized by easD in the presence of NAD(+), resulting in the formation of chanoclavine-I aldehyde. Agroclavine dehydrogenase easG then mediates the conversion of chanoclavine-I aldehyde to agroclavine via a non-enzymatic adduct reaction: the substrate is an iminium intermediate that is formed spontaneously from chanoclavine-I aldehyde in the presence of glutathione. The presence of easA is not required to complete this reaction. Further conversion of agroclavine to paspalic acid is a two-step process involving oxidation of agroclavine to elymoclavine and of elymoclavine to paspalic acid, the second step being performed by the elymoclavine oxidase cloA. Paspalic acid is then further converted to D-lysergic acid. Ergopeptines are assembled from D-lysergic acid and three different amino acids by the D-lysergyl-peptide-synthetases composed each of a monomudular and a trimodular nonribosomal peptide synthetase subunit. LpsB and lpsC encode the monomodular subunits responsible for D-lysergic acid activation and incorporation into the ergopeptine backbone. LpsA1 and A2 subunits encode the trimodular nonribosomal peptide synthetase assembling the tripeptide portion of ergopeptines. LpsA1 is responsible for formation of the major ergopeptine, ergotamine, and lpsA2 for alpha-ergocryptine, the minor ergopeptine of the total alkaloid mixture elaborated by C.purpurea. D-lysergyl-tripeptides are assembled by the nonribosomal peptide synthetases and released as N-(D-lysergyl-aminoacyl)-lactams. Cyclolization of the D-lysergyl-tripeptides is performed by the Fe(2+)/2-ketoglutarate-dependent dioxygenase easH which introduces a hydroxyl group into N-(D-lysergyl-aminoacyl)-lactam at alpha-C of the aminoacyl residue followed by spontaneous condensation with the terminal lactam carbonyl group. The protein is FAD-linked oxidoreductase easE of Claviceps purpurea (strain 20.1) (Ergot fungus).